Reading from the N-terminus, the 209-residue chain is Uracil phosphoribosyltransferase (209 aa).

Residues Arg79, Arg104, and 131–139 (DPMLATGGS) contribute to the 5-phospho-alpha-D-ribose 1-diphosphate site. Uracil is bound by residues Ile194 and 199–201 (GDA). Position 200 (Asp200) interacts with 5-phospho-alpha-D-ribose 1-diphosphate.

Belongs to the UPRTase family. Mg(2+) serves as cofactor.

The catalysed reaction is UMP + diphosphate = 5-phospho-alpha-D-ribose 1-diphosphate + uracil. It participates in pyrimidine metabolism; UMP biosynthesis via salvage pathway; UMP from uracil: step 1/1. Allosterically activated by GTP. Catalyzes the conversion of uracil and 5-phospho-alpha-D-ribose 1-diphosphate (PRPP) to UMP and diphosphate. The polypeptide is Uracil phosphoribosyltransferase (Streptococcus pneumoniae serotype 4 (strain ATCC BAA-334 / TIGR4)).